We begin with the raw amino-acid sequence, 808 residues long: Protein translocase subunit SecA (808 aa).

ATP is bound by residues Gln87, 105–109, and Asp493; that span reads GEGKT.

The protein belongs to the SecA family. In terms of assembly, monomer and homodimer. Part of the essential Sec protein translocation apparatus which comprises SecA, SecYEG and auxiliary proteins SecDF. Other proteins may also be involved.

The protein resides in the cell membrane. It is found in the cytoplasm. It catalyses the reaction ATP + H2O + cellular proteinSide 1 = ADP + phosphate + cellular proteinSide 2.. Part of the Sec protein translocase complex. Interacts with the SecYEG preprotein conducting channel. Has a central role in coupling the hydrolysis of ATP to the transfer of proteins into and across the cell membrane, serving as an ATP-driven molecular motor driving the stepwise translocation of polypeptide chains across the membrane. The protein is Protein translocase subunit SecA of Mycoplasma pneumoniae (strain ATCC 29342 / M129 / Subtype 1) (Mycoplasmoides pneumoniae).